Reading from the N-terminus, the 349-residue chain is tRNA N6-adenosine threonylcarbamoyltransferase (349 aa).

The Fe cation site is built by His-117, His-121, and Tyr-138. Residues 138–142, Asp-170, Asp-191, and Asn-271 contribute to the substrate site; that span reads YVAGG. Asp-299 is a binding site for Fe cation.

It belongs to the KAE1 / TsaD family. It depends on Fe(2+) as a cofactor.

The protein resides in the cytoplasm. It carries out the reaction L-threonylcarbamoyladenylate + adenosine(37) in tRNA = N(6)-L-threonylcarbamoyladenosine(37) in tRNA + AMP + H(+). Required for the formation of a threonylcarbamoyl group on adenosine at position 37 (t(6)A37) in tRNAs that read codons beginning with adenine. Is probably involved in the transfer of the threonylcarbamoyl moiety of threonylcarbamoyl-AMP (TC-AMP) to the N6 group of A37. The sequence is that of tRNA N6-adenosine threonylcarbamoyltransferase from Aeropyrum pernix (strain ATCC 700893 / DSM 11879 / JCM 9820 / NBRC 100138 / K1).